The following is a 964-amino-acid chain: Probable LRR receptor-like serine/threonine-protein kinase IRK (964 aa).

Positions 1–20 are cleaved as a signal peptide; it reads MYKALIFTVLLVSAVAPVRS. Topologically, residues 21–603 are extracellular; it reads LDPPLNDDVL…GHKRILLSIS (583 aa). LRR repeat units lie at residues 92 to 116, 117 to 141, 143 to 166, 168 to 190, 191 to 214, 215 to 238, 240 to 261, 263 to 286, 287 to 310, 312 to 334, and 335 to 358; these read LQFLHKLSLSNNNLTGIINPNMLLS, LVNLKVVDLSSNGLSGSLPDEFFRQ, GSLRVLSLAKNKLTGKIPVSISSC, SLAALNLSSNGFSGSMPLGIWSL, NTLRSLDLSRNELEGEFPEKIDRL, NNLRALDLSRNRLSGPIPSEIGSC, LLKTIDLSENSLSGSLPNTFQQ, SLCYSLNLGKNALEGEVPKWIGEM, RSLETLDLSMNKFSGQVPDSIGNL, ALKVLNFSGNGLIGSLPVSTANC, and INLLALDLSGNSLTGKLPMWLFQD. N104 carries an N-linked (GlcNAc...) asparagine glycan. An N-linked (GlcNAc...) asparagine glycan is attached at N173. N317 is a glycosylation site (N-linked (GlcNAc...) asparagine). N370 carries an N-linked (GlcNAc...) asparagine glycan. LRR repeat units follow at residues 375 to 399, 400 to 423, 425 to 447, 448 to 471, 472 to 495, 496 to 519, and 521 to 544; these read IKKIQVLDLSHNAFSGEIGAGLGDL, RDLEGLHLSRNSLTGPIPSTIGEL, HLSVLDVSHNQLNGMIPRETGGA, VSLEELRLENNLLEGNIPSSIKNC, SSLRSLILSHNKLLGSIPPELAKL, TRLEEVDLSFNELAGTLPKQLANL, and YLHTFNISHNHLFGELPAGGIFNG. N470 is a glycosylation site (N-linked (GlcNAc...) asparagine). N-linked (GlcNAc...) asparagine glycans are attached at residues N526, N562, and N578. The chain crosses the membrane as a helical span at residues 604 to 624; that stretch reads SLIAISAAAAIVVGVIAITVL. Residues 625–964 lie on the Cytoplasmic side of the membrane; sequence NLRVRASTVS…SGSSDELGSS (340 aa). A Protein kinase domain is found at 678-951; sequence LNKDCELGRG…GEAVNILRMI (274 aa). Residues 684-692 and K706 contribute to the ATP site; that span reads LGRGGFGAV.

It belongs to the protein kinase superfamily. Ser/Thr protein kinase family. As to quaternary structure, interacts with IRKI. Post-translationally, autophosphorylated. In terms of tissue distribution, highly expressed in root tips, shoot apices and developing flowers.

The protein resides in the cell membrane. It carries out the reaction L-seryl-[protein] + ATP = O-phospho-L-seryl-[protein] + ADP + H(+). The catalysed reaction is L-threonyl-[protein] + ATP = O-phospho-L-threonyl-[protein] + ADP + H(+). This chain is Probable LRR receptor-like serine/threonine-protein kinase IRK, found in Arabidopsis thaliana (Mouse-ear cress).